We begin with the raw amino-acid sequence, 368 residues long: Glutamate 5-kinase (368 aa).

Lys13 contributes to the ATP binding site. Substrate-binding residues include Ser54, Asp141, and Asn153. Ser173–Asp174 provides a ligand contact to ATP. Positions Arg278–Ala355 constitute a PUA domain.

Belongs to the glutamate 5-kinase family.

Its subcellular location is the cytoplasm. The enzyme catalyses L-glutamate + ATP = L-glutamyl 5-phosphate + ADP. Its pathway is amino-acid biosynthesis; L-proline biosynthesis; L-glutamate 5-semialdehyde from L-glutamate: step 1/2. Its function is as follows. Catalyzes the transfer of a phosphate group to glutamate to form L-glutamate 5-phosphate. This chain is Glutamate 5-kinase, found in Ruegeria sp. (strain TM1040) (Silicibacter sp.).